A 582-amino-acid polypeptide reads, in one-letter code: DnaJ protein ERDJ3A (582 aa).

An N-terminal signal peptide occupies residues 1–25 (MGIPVRSLLVASIVLSSIALHVAAA). Positions 29–93 (DPYKVLGVDK…EKRKNYDLYG (65 aa)) constitute a J domain. Residue Asn61 is glycosylated (N-linked (GlcNAc...) asparagine). The segment at 178 to 201 (GGSQHTGSAGKARRGTKSSGHDSS) is disordered. The stretch at 407 to 437 (VKDLRSGIKELKNLLENFEKKNKKLASNQAK) forms a coiled coil.

As to quaternary structure, interacts with BIP5.

The protein resides in the endoplasmic reticulum. It is found in the vacuole. May play a role in protein folding in the endoplasmic reticulum. The chain is DnaJ protein ERDJ3A from Oryza sativa subsp. japonica (Rice).